The primary structure comprises 137 residues: Small ribosomal subunit protein uS11 (137 aa).

2 disordered regions span residues 1–31 (MPPKSRGTGPKKTQKARRRDKKNVPHGAAHI) and 117–137 (TISDVTPQPHNGCRPPKRRRV). Over residues 12-21 (KTQKARRRDK) the composition is skewed to basic residues.

The protein belongs to the universal ribosomal protein uS11 family. In terms of assembly, part of the 30S ribosomal subunit. Interacts with proteins S7 and S18. Binds to IF-3.

Functionally, located on the platform of the 30S subunit, it bridges several disparate RNA helices of the 16S rRNA. Forms part of the Shine-Dalgarno cleft in the 70S ribosome. The polypeptide is Small ribosomal subunit protein uS11 (Rhodococcus jostii (strain RHA1)).